The primary structure comprises 327 residues: Undecaprenyl-phosphate 4-deoxy-4-formamido-L-arabinose transferase (327 aa).

Transmembrane regions (helical) follow at residues 233-253 (ILSL…LLLI) and 268-288 (VFTL…GMGL).

The protein belongs to the glycosyltransferase 2 family.

Its subcellular location is the cell inner membrane. The catalysed reaction is UDP-4-deoxy-4-formamido-beta-L-arabinose + di-trans,octa-cis-undecaprenyl phosphate = 4-deoxy-4-formamido-alpha-L-arabinopyranosyl di-trans,octa-cis-undecaprenyl phosphate + UDP. It participates in glycolipid biosynthesis; 4-amino-4-deoxy-alpha-L-arabinose undecaprenyl phosphate biosynthesis; 4-amino-4-deoxy-alpha-L-arabinose undecaprenyl phosphate from UDP-4-deoxy-4-formamido-beta-L-arabinose and undecaprenyl phosphate: step 1/2. Its pathway is bacterial outer membrane biogenesis; lipopolysaccharide biosynthesis. In terms of biological role, catalyzes the transfer of 4-deoxy-4-formamido-L-arabinose from UDP to undecaprenyl phosphate. The modified arabinose is attached to lipid A and is required for resistance to polymyxin and cationic antimicrobial peptides. The polypeptide is Undecaprenyl-phosphate 4-deoxy-4-formamido-L-arabinose transferase (Pectobacterium carotovorum subsp. carotovorum (strain PC1)).